Consider the following 145-residue polypeptide: Basic phospholipase A2 S2-22 (145 aa).

A signal peptide spans 1–19; the sequence is MYPAHLLVLLAVCVSLLGA. Positions 20 to 27 are excised as a propeptide; it reads SDIPPQPL. 7 disulfide bridges follow: C38-C99, C54-C144, C56-C72, C71-C127, C78-C120, C88-C113, and C106-C118. Ca(2+) is bound by residues Y55, G57, and G59. H75 is an active-site residue. D76 is a Ca(2+) binding site. D121 is a catalytic residue.

The protein belongs to the phospholipase A2 family. Group I subfamily. D49 sub-subfamily. The cofactor is Ca(2+). Expressed by the venom gland.

It is found in the secreted. The catalysed reaction is a 1,2-diacyl-sn-glycero-3-phosphocholine + H2O = a 1-acyl-sn-glycero-3-phosphocholine + a fatty acid + H(+). Its function is as follows. Snake venom phospholipase A2 (PLA2) that inhibits collagen-induced platelet aggregation. PLA2 catalyzes the calcium-dependent hydrolysis of the 2-acyl groups in 3-sn-phosphoglycerides. This is Basic phospholipase A2 S2-22 from Austrelaps superbus (Lowland copperhead snake).